Reading from the N-terminus, the 1854-residue chain is Dystrophin, isoform D (1854 aa).

8 disordered regions span residues 1 to 65 (MTTT…PIYA), 84 to 161 (GSTT…YEMP), 240 to 352 (QSPT…MSPA), 516 to 548 (LKPT…PTPS), 595 to 650 (TPGG…TSES), 716 to 740 (VMSK…PSTA), 783 to 830 (LKLQ…STTP), and 1012 to 1036 (VSDT…EQSR). Composition is skewed to low complexity over residues 11-37 (QRQQ…QQHQ) and 84-96 (GSTT…LQSS). Over residues 143 to 157 (GLSSAQPATSASSGN) the composition is skewed to polar residues. Positions 276 to 296 (QQQQQQQQAGINGQINGNGNQ) are enriched in low complexity. Composition is skewed to polar residues over residues 331 to 345 (TLSR…SSAD) and 518 to 536 (PTST…SNTA). The segment covering 595-606 (TPGGGVVGGQAA) has biased composition (gly residues). Residues 716 to 727 (VMSKSNSSLGSV) are compositionally biased toward polar residues. Low complexity-rich tracts occupy residues 728-740 (TTPS…PSTA) and 783-814 (LKLQ…QQIQ). The span at 815 to 830 (NGFASDDNSSSCSTTP) shows a compositional bias: polar residues. 2 Spectrin repeats span residues 936 to 1069 (EHWN…RLDE) and 1072 to 1176 (TKMR…VLCQ). A disordered region spans residues 1179–1209 (AQQTHENGDDGRTTSNSGTIGPLPNLGQSVK). The WW domain occupies 1206–1239 (QSVKPPWERATTAANVPYYIDHERETTHWDHPEM). The ZZ-type zinc-finger motif lies at 1464–1520 (KHQAKCNICKEYPIVGFRYRCLKCFNFDMCQKCFFFGRNAKNHKLTHPMHEYCTTTT). Zn(2+) is bound by residues Cys1469, Cys1472, Cys1484, Cys1487, Cys1493, Cys1496, His1506, and His1510. Ser1564 carries the phosphoserine modification. Disordered regions lie at residues 1673-1701 (EQSG…GEQG) and 1744-1854 (DEPN…ELQK). Polar residues-rich tracts occupy residues 1682-1694 (NGMQ…MTGL) and 1765-1796 (ALNS…QQNG). Positions 1815–1826 (QELESINDDLED) are enriched in acidic residues. The segment covering 1827-1845 (SSSSNTTNTTTTTTTTATT) has biased composition (low complexity).

In terms of assembly, component of the dystrophin associated protein complex (DAPC). Interacts with Dg, via the Dg WW domain binding sites. As to expression, during embryogenesis and in third instar larvae, expression is seen in pericardial cells of the dorsal vessel and in the ventral nerve cord. Expression is absent from both the embryonic and larval musculature.

It is found in the cell membrane. The protein localises to the sarcolemma. Its subcellular location is the cytoplasm. The protein resides in the cytoskeleton. In terms of biological role, required for the maintenance of appropriate synaptic retrograde communication and the stabilization of muscle cell architecture or physiology. May play a role in anchoring the cytoskeleton to the plasma membrane. In Drosophila melanogaster (Fruit fly), this protein is Dystrophin, isoform D (Dys).